Here is a 289-residue protein sequence, read N- to C-terminus: Transmembrane protein 163 (289 aa).

Residues 1–65 form a disordered region; sequence MEPAAGIQRR…ESGQFSDGLE (65 aa). Residues 1–88 are Cytoplasmic-facing; it reads MEPAAGIQRR…HEAQNYRKKA (88 aa). At S11 the chain carries Phosphoserine. Pro residues predominate over residues 16-36; it reads TVPPPPRGHAPPAAAPGPAPL. Positions 42–72 are required for interaction with MCOLN1; it reads EPPQLEEERQVRISESGQFSDGLEDRGLLES. A phosphoserine mark is found at S55, S57, and S61. The chain crosses the membrane as a helical span at residues 89-109; the sequence is LWVSWFSIIVTLALAVAAFTV. At 110-116 the chain is on the extracellular side; sequence SVMRYSA. A helical transmembrane segment spans residues 117 to 137; sequence SAFGFAFDAILDVLSSAIVLW. At 138 to 150 the chain is on the cytoplasmic side; that stretch reads RYSNAAAVHSAHR. Residues 151–171 traverse the membrane as a helical segment; sequence EYIACVILGVIFLLSSICIVV. The Extracellular portion of the chain corresponds to 172 to 187; it reads KAIHDLSTRLLPEVDD. Residues 188 to 208 form a helical membrane-spanning segment; sequence FLFSVSILSGILCSILAVLKF. Residues 209–217 are Cytoplasmic-facing; that stretch reads MLGKVLTSR. A helical membrane pass occupies residues 218-238; sequence ALITDGFNSLVGGVMGFSILL. Topologically, residues 239 to 255 are extracellular; the sequence is SAEVFKHDSAVWYLDGS. A helical membrane pass occupies residues 256–276; the sequence is IGVLIGLTIFAYGVKLLIDMV. At 277 to 289 the chain is on the cytoplasmic side; the sequence is PRVRQTRHYEMFE.

The protein belongs to the TMEM163 family. As to quaternary structure, homodimer. Interacts with MCOLN1/TRPML1. Interacts with SLC30A1, SLC30A2, SLC30A3 and SLC30A4. As to expression, widely expressed. High expression is detected in brain, lung and testis.

It localises to the cytoplasmic vesicle. The protein resides in the secretory vesicle. The protein localises to the synaptic vesicle membrane. It is found in the early endosome membrane. Its subcellular location is the late endosome membrane. It localises to the lysosome membrane. The protein resides in the cell membrane. The catalysed reaction is Zn(2+)(in) = Zn(2+)(out). Zinc ion transporter that mediates zinc efflux and plays a crucial role in intracellular zinc homeostasis. Binds the divalent cations Zn(2+), Ni(2+), and to a minor extent Cu(2+). Is a functional modulator of P2X purinoceptors, including P2RX1, P2RX3, P2RX4 and P2RX7. Plays a role in central nervous system development and is required for myelination, and survival and proliferation of oligodendrocytes. In Homo sapiens (Human), this protein is Transmembrane protein 163 (TMEM163).